A 588-amino-acid polypeptide reads, in one-letter code: L-fucose isomerase (588 aa).

Catalysis depends on proton acceptor residues Glu335 and Asp359. Positions 335, 359, and 525 each coordinate Mn(2+).

The protein belongs to the L-fucose isomerase family. It depends on Mn(2+) as a cofactor.

It is found in the cytoplasm. The catalysed reaction is L-fucose = L-fuculose. Its pathway is carbohydrate degradation; L-fucose degradation; L-lactaldehyde and glycerone phosphate from L-fucose: step 1/3. Functionally, converts the aldose L-fucose into the corresponding ketose L-fuculose. The protein is L-fucose isomerase of Streptococcus pneumoniae (strain Taiwan19F-14).